Here is a 238-residue protein sequence, read N- to C-terminus: COMM domain-containing protein 10 homolog Vlet (238 aa).

Low complexity predominate over residues 43–77 (ASASATSSTVGTSVTTTGRVDSSTEENPTSNTEPE). The segment at 43–78 (ASASATSSTVGTSVTTTGRVDSSTEENPTSNTEPEY) is disordered. One can recognise a COMM domain in the interval 161–225 (VIEDVAWKLN…SIQGELDAML (65 aa)).

It belongs to the COMM domain-containing protein 10 family. As to quaternary structure, component of the commander complex consisting of the CCC subcomplex and the retriever subcomplex. Component of the CCC subcomplex. Interacts with Smn; along with Sbat and Hez may form an accessory subcomplex involved in SMN complex function.

In terms of biological role, scaffold protein in the commander complex that is essential for endosomal recycling of transmembrane cargos; the commander complex is composed of the CCC subcomplex and the retriever subcomplex. May modulate activity of cullin-RING E3 ubiquitin ligase (CRL) complexes. May down-regulate activation of NF-kappa-B. May have an accessory function in the survival motor neuron (SMN) complex. Required for neuromuscular function and organismal viability. In Drosophila melanogaster (Fruit fly), this protein is COMM domain-containing protein 10 homolog Vlet.